The primary structure comprises 196 residues: Ribonuclease HII (196 aa).

Residues 9–196 (GLVCGIDEAG…GPVARQLSLL (188 aa)) enclose the RNase H type-2 domain. A divalent metal cation is bound by residues Asp15, Glu16, and Asp107.

The protein belongs to the RNase HII family. Mn(2+) serves as cofactor. It depends on Mg(2+) as a cofactor.

It is found in the cytoplasm. The catalysed reaction is Endonucleolytic cleavage to 5'-phosphomonoester.. Endonuclease that specifically degrades the RNA of RNA-DNA hybrids. The sequence is that of Ribonuclease HII from Dechloromonas aromatica (strain RCB).